The following is a 469-amino-acid chain: Neuraminidase (469 aa).

At 1–6 (MNPNQK) the chain is on the intravirion side. A helical membrane pass occupies residues 7–27 (IITIGSICMVVGIISLILQIG). The involved in apical transport and lipid raft association stretch occupies residues 11 to 33 (GSICMVVGIISLILQIGNIVSIW). The Virion surface segment spans residues 28–469 (NIVSIWISHS…DAELPLNIDK (442 aa)). The hypervariable stalk region stretch occupies residues 36 to 90 (HSIQTGNQNHTGTCDQSIITYKNSTWVNQTYVNISNTNVVAGKDTTSVILAGNSS). Residues N44, N58, N63, N68, and N88 are each glycosylated (N-linked (GlcNAc...) asparagine; by host). Residues 91–469 (LCPIRGWAIY…DAELPLNIDK (379 aa)) form a head of neuraminidase region. Cystine bridges form between C92/C417, C124/C129, C184/C231, C233/C238, C279/C292, C281/C290, C318/C335, and C421/C446. Residue R118 participates in substrate binding. N-linked (GlcNAc...) asparagine; by host glycosylation is present at N146. Residue D151 is the Proton donor/acceptor of the active site. R152 provides a ligand contact to substrate. A glycan (N-linked (GlcNAc...) asparagine; by host) is linked at N235. 277–278 (EE) contributes to the substrate binding site. Position 293 (R293) interacts with substrate. Positions 294, 298, and 324 each coordinate Ca(2+). N365 is a glycosylation site (N-linked (GlcNAc...) asparagine; by host). Residue R368 coordinates substrate. Y402 (nucleophile) is an active-site residue.

It belongs to the glycosyl hydrolase 34 family. In terms of assembly, homotetramer. It depends on Ca(2+) as a cofactor. Post-translationally, N-glycosylated.

It localises to the virion membrane. The protein resides in the host apical cell membrane. It catalyses the reaction Hydrolysis of alpha-(2-&gt;3)-, alpha-(2-&gt;6)-, alpha-(2-&gt;8)- glycosidic linkages of terminal sialic acid residues in oligosaccharides, glycoproteins, glycolipids, colominic acid and synthetic substrates.. Inhibited by the neuraminidase inhibitors zanamivir (Relenza) and oseltamivir (Tamiflu). These drugs interfere with the release of progeny virus from infected cells and are effective against all influenza strains. Resistance to neuraminidase inhibitors is quite rare. Functionally, catalyzes the removal of terminal sialic acid residues from viral and cellular glycoconjugates. Cleaves off the terminal sialic acids on the glycosylated HA during virus budding to facilitate virus release. Additionally helps virus spread through the circulation by further removing sialic acids from the cell surface. These cleavages prevent self-aggregation and ensure the efficient spread of the progeny virus from cell to cell. Otherwise, infection would be limited to one round of replication. Described as a receptor-destroying enzyme because it cleaves a terminal sialic acid from the cellular receptors. May facilitate viral invasion of the upper airways by cleaving the sialic acid moieties on the mucin of the airway epithelial cells. Likely to plays a role in the budding process through its association with lipid rafts during intracellular transport. May additionally display a raft-association independent effect on budding. Plays a role in the determination of host range restriction on replication and virulence. Sialidase activity in late endosome/lysosome traffic seems to enhance virus replication. The chain is Neuraminidase from Influenza A virus (strain A/Fort Monmouth/1/1947 H1N1).